Here is a 359-residue protein sequence, read N- to C-terminus: UDP-3-O-acylglucosamine N-acyltransferase (359 aa).

The active-site Proton acceptor is the His256.

Belongs to the transferase hexapeptide repeat family. LpxD subfamily. As to quaternary structure, homotrimer.

It catalyses the reaction a UDP-3-O-[(3R)-3-hydroxyacyl]-alpha-D-glucosamine + a (3R)-hydroxyacyl-[ACP] = a UDP-2-N,3-O-bis[(3R)-3-hydroxyacyl]-alpha-D-glucosamine + holo-[ACP] + H(+). It functions in the pathway bacterial outer membrane biogenesis; LPS lipid A biosynthesis. Functionally, catalyzes the N-acylation of UDP-3-O-acylglucosamine using 3-hydroxyacyl-ACP as the acyl donor. Is involved in the biosynthesis of lipid A, a phosphorylated glycolipid that anchors the lipopolysaccharide to the outer membrane of the cell. The sequence is that of UDP-3-O-acylglucosamine N-acyltransferase from Rhodopseudomonas palustris (strain HaA2).